A 277-amino-acid chain; its full sequence is Shikimate dehydrogenase (NADP(+)) (277 aa).

Residues S15–S17 and T62 each bind shikimate. The active-site Proton acceptor is K66. 2 residues coordinate shikimate: N87 and D102. Residues G127 to A131 and I219 contribute to the NADP(+) site. A shikimate-binding site is contributed by Y221. G242 lines the NADP(+) pocket.

It belongs to the shikimate dehydrogenase family. In terms of assembly, homodimer.

The enzyme catalyses shikimate + NADP(+) = 3-dehydroshikimate + NADPH + H(+). The protein operates within metabolic intermediate biosynthesis; chorismate biosynthesis; chorismate from D-erythrose 4-phosphate and phosphoenolpyruvate: step 4/7. Involved in the biosynthesis of the chorismate, which leads to the biosynthesis of aromatic amino acids. Catalyzes the reversible NADPH linked reduction of 3-dehydroshikimate (DHSA) to yield shikimate (SA). In Bacillus cytotoxicus (strain DSM 22905 / CIP 110041 / 391-98 / NVH 391-98), this protein is Shikimate dehydrogenase (NADP(+)).